The sequence spans 370 residues: GTPase Obg (370 aa).

The region spanning 1–159 is the Obg domain; the sequence is MKFIDEARIE…RMLRLELKVL (159 aa). Residues 127–146 are disordered; that stretch reads NLHFKSSTNRAPRQKTDGKP. One can recognise an OBG-type G domain in the interval 160–334; the sequence is ADVGLLGMPN…LCYAIYDYLA (175 aa). Residues 166 to 173, 191 to 195, 213 to 216, 284 to 287, and 315 to 317 contribute to the GTP site; these read GMPNAGKS, FTTLA, DIPG, NKLD, and SAL. Residues serine 173 and threonine 193 each coordinate Mg(2+).

It belongs to the TRAFAC class OBG-HflX-like GTPase superfamily. OBG GTPase family. In terms of assembly, monomer. It depends on Mg(2+) as a cofactor.

It localises to the cytoplasm. Its function is as follows. An essential GTPase which binds GTP, GDP and possibly (p)ppGpp with moderate affinity, with high nucleotide exchange rates and a fairly low GTP hydrolysis rate. Plays a role in control of the cell cycle, stress response, ribosome biogenesis and in those bacteria that undergo differentiation, in morphogenesis control. The polypeptide is GTPase Obg (Burkholderia lata (strain ATCC 17760 / DSM 23089 / LMG 22485 / NCIMB 9086 / R18194 / 383)).